The following is a 330-amino-acid chain: Ribosomal RNA small subunit methyltransferase H (330 aa).

Residues 48-50 (GGH), Asp67, Leu101, Asp115, and Gln122 contribute to the S-adenosyl-L-methionine site.

This sequence belongs to the methyltransferase superfamily. RsmH family.

It localises to the cytoplasm. It carries out the reaction cytidine(1402) in 16S rRNA + S-adenosyl-L-methionine = N(4)-methylcytidine(1402) in 16S rRNA + S-adenosyl-L-homocysteine + H(+). In terms of biological role, specifically methylates the N4 position of cytidine in position 1402 (C1402) of 16S rRNA. The chain is Ribosomal RNA small subunit methyltransferase H from Pseudarthrobacter chlorophenolicus (strain ATCC 700700 / DSM 12829 / CIP 107037 / JCM 12360 / KCTC 9906 / NCIMB 13794 / A6) (Arthrobacter chlorophenolicus).